The sequence spans 431 residues: MYRFAPSPTGDMHIGNLRAAIFNYICARQKNMDFILRIEDTDKARNIAGKEEEIKEILNLFGISWQHYYIQSENLKFHRQMALKLVSEKKAFACFCTEEELEAKKELAKKQGKAYRYDGTCEKLADIDVLECEKPFVIRLKKPTHTMKFTDFIKGELSFEPENIDSFVIMRTDKTPTYNFACAVDDMLENVTCIIRGEDHVSNTPKQEHIRASLGYNKAMTYAHLPIILNEEGVKMSKREAHSSVKWLLESGILPSAIANYLIMLGNKTPCEIFTLEEAIKWFDISKVSKAPARFDLKKLLQINREHIKMIKDDELNKILDLNKDLAQLAKFYTQEASTIKELKEKMRAIFNTKDFGEFETECKILKELLKDIELFENYEDFKNELLSKSDLKGKKFFMPLRIILTGNIHGPELSDLYPYIKNFIHELARI.

The short motif at 6-16 (PSPTGDMHIGN) is the 'HIGH' region element. The 'KMSKS' region signature appears at 235–239 (KMSKR). K238 provides a ligand contact to ATP.

Belongs to the class-I aminoacyl-tRNA synthetase family. Glutamate--tRNA ligase type 1 subfamily. As to quaternary structure, monomer.

The protein resides in the cytoplasm. It carries out the reaction tRNA(Glu) + L-glutamate + ATP = L-glutamyl-tRNA(Glu) + AMP + diphosphate. In terms of biological role, catalyzes the attachment of glutamate to tRNA(Glu) in a two-step reaction: glutamate is first activated by ATP to form Glu-AMP and then transferred to the acceptor end of tRNA(Glu). This chain is Glutamate--tRNA ligase 1, found in Campylobacter jejuni subsp. jejuni serotype O:23/36 (strain 81-176).